A 194-amino-acid polypeptide reads, in one-letter code: HTH-type transcriptional regulator BetI (194 aa).

The HTH tetR-type domain occupies 8–68 (EIRRAQLIDA…ATMRHVLRDL (61 aa)). Positions 31–50 (TLASVAQRANISTGIVSHYF) form a DNA-binding region, H-T-H motif.

Its pathway is amine and polyamine biosynthesis; betaine biosynthesis via choline pathway [regulation]. Repressor involved in the biosynthesis of the osmoprotectant glycine betaine. It represses transcription of the choline transporter BetT and the genes of BetAB involved in the synthesis of glycine betaine. This Burkholderia cenocepacia (strain HI2424) protein is HTH-type transcriptional regulator BetI.